A 147-amino-acid polypeptide reads, in one-letter code: Spermidine export protein MdtJ (147 aa).

The next 4 membrane-spanning stretches (helical) occupy residues 1-21 (MIYW…TLSM), 31-51 (TGHI…SLAV), 54-74 (VALG…ITIF), and 81-101 (ETLS…ILLV). The interval 105–147 (TRKPKQPNCHRGNRPPSVQELKTQTTGHHKGVAVESGEHHAAA) is disordered.

It belongs to the drug/metabolite transporter (DMT) superfamily. Small multidrug resistance (SMR) (TC 2.A.7.1) family. MdtJ subfamily. Forms a complex with MdtI.

The protein localises to the cell inner membrane. In terms of biological role, catalyzes the excretion of spermidine. The chain is Spermidine export protein MdtJ from Yersinia pestis bv. Antiqua (strain Antiqua).